A 348-amino-acid chain; its full sequence is Anthranilate phosphoribosyltransferase (348 aa).

Residues Gly-91, 94 to 95, Thr-99, 101 to 104, 119 to 127, and Ser-131 contribute to the 5-phospho-alpha-D-ribose 1-diphosphate site; these read GD, NIST, and KHGNRSASG. Gly-91 is an anthranilate binding site. Mg(2+) is bound at residue Ser-103. Asn-122 provides a ligand contact to anthranilate. Residue Arg-177 coordinates anthranilate. Residues Asp-236 and Glu-237 each coordinate Mg(2+).

It belongs to the anthranilate phosphoribosyltransferase family. Homodimer. It depends on Mg(2+) as a cofactor.

It catalyses the reaction N-(5-phospho-beta-D-ribosyl)anthranilate + diphosphate = 5-phospho-alpha-D-ribose 1-diphosphate + anthranilate. It participates in amino-acid biosynthesis; L-tryptophan biosynthesis; L-tryptophan from chorismate: step 2/5. Functionally, catalyzes the transfer of the phosphoribosyl group of 5-phosphorylribose-1-pyrophosphate (PRPP) to anthranilate to yield N-(5'-phosphoribosyl)-anthranilate (PRA). In Synechococcus elongatus (strain ATCC 33912 / PCC 7942 / FACHB-805) (Anacystis nidulans R2), this protein is Anthranilate phosphoribosyltransferase.